The following is a 193-amino-acid chain: Holliday junction branch migration complex subunit RuvA (193 aa).

The domain I stretch occupies residues 1–64; it reads MIGRIAGTLL…EDAHLLYGFL (64 aa). The segment at 65-139 is domain II; sequence TPQERSTFRE…GKLGADLGPL (75 aa). Residues 139-143 form a flexible linker region; sequence LAGAA. A domain III region spans residues 144–193; that stretch reads SPSDHAADILNALLALGYSEKEALAAIKNVPAGTGVSEGIKLSLKALSKA.

Belongs to the RuvA family. As to quaternary structure, homotetramer. Forms an RuvA(8)-RuvB(12)-Holliday junction (HJ) complex. HJ DNA is sandwiched between 2 RuvA tetramers; dsDNA enters through RuvA and exits via RuvB. An RuvB hexamer assembles on each DNA strand where it exits the tetramer. Each RuvB hexamer is contacted by two RuvA subunits (via domain III) on 2 adjacent RuvB subunits; this complex drives branch migration. In the full resolvosome a probable DNA-RuvA(4)-RuvB(12)-RuvC(2) complex forms which resolves the HJ.

It is found in the cytoplasm. The RuvA-RuvB-RuvC complex processes Holliday junction (HJ) DNA during genetic recombination and DNA repair, while the RuvA-RuvB complex plays an important role in the rescue of blocked DNA replication forks via replication fork reversal (RFR). RuvA specifically binds to HJ cruciform DNA, conferring on it an open structure. The RuvB hexamer acts as an ATP-dependent pump, pulling dsDNA into and through the RuvAB complex. HJ branch migration allows RuvC to scan DNA until it finds its consensus sequence, where it cleaves and resolves the cruciform DNA. This is Holliday junction branch migration complex subunit RuvA from Burkholderia thailandensis (strain ATCC 700388 / DSM 13276 / CCUG 48851 / CIP 106301 / E264).